The chain runs to 87 residues: MANIKSAKKRAVQSEKHRLHNASRRSMVRTFVRKVYNAILTQDKKAAQQAFSAMQPIVDRQASKGLIHKNKAARYKSHLITQINKMH.

The tract at residues 1–25 is disordered; it reads MANIKSAKKRAVQSEKHRLHNASRR.

Belongs to the bacterial ribosomal protein bS20 family.

Its function is as follows. Binds directly to 16S ribosomal RNA. This is Small ribosomal subunit protein bS20 from Baumannia cicadellinicola subsp. Homalodisca coagulata.